A 146-amino-acid chain; its full sequence is Hemoglobin subunit beta (146 aa).

Residues 2 to 146 enclose the Globin domain; the sequence is QWAAEEKQLI…VAHALARKYH (145 aa). Positions 63 and 92 each coordinate heme b.

The protein belongs to the globin family. As to quaternary structure, heterotetramer of two alpha chains and two beta chains. In terms of tissue distribution, red blood cells.

Involved in oxygen transport from the lung to the various peripheral tissues. This is Hemoglobin subunit beta (HBB) from Accipiter gentilis (Northern goshawk).